The following is a 369-amino-acid chain: NAD(P)H-quinone oxidoreductase subunit 1, chloroplastic (369 aa).

A run of 8 helical transmembrane segments spans residues 29–49, 97–117, 129–149, 167–187, 205–225, 255–275, 305–325, and 348–368; these read IWII…VLVI, IWLF…SYLV, LGIG…GLLM, AAQS…ISLL, LLGW…ISSL, FGLF…FVTV, IINA…FLFV, and FLLP…ILLL.

It belongs to the complex I subunit 1 family. NDH is composed of at least 16 different subunits, 5 of which are encoded in the nucleus.

It is found in the plastid. It localises to the chloroplast thylakoid membrane. The catalysed reaction is a plastoquinone + NADH + (n+1) H(+)(in) = a plastoquinol + NAD(+) + n H(+)(out). The enzyme catalyses a plastoquinone + NADPH + (n+1) H(+)(in) = a plastoquinol + NADP(+) + n H(+)(out). NDH shuttles electrons from NAD(P)H:plastoquinone, via FMN and iron-sulfur (Fe-S) centers, to quinones in the photosynthetic chain and possibly in a chloroplast respiratory chain. The immediate electron acceptor for the enzyme in this species is believed to be plastoquinone. Couples the redox reaction to proton translocation, and thus conserves the redox energy in a proton gradient. The sequence is that of NAD(P)H-quinone oxidoreductase subunit 1, chloroplastic from Angiopteris evecta (Mule's foot fern).